Reading from the N-terminus, the 486-residue chain is Nuclear distribution protein PAC1 (486 aa).

Residues 66-99 (STVLRLQKKIIDLENEISNLNNIINSTNSDNNGI) are a coiled coil. WD repeat units lie at residues 119-158 (QCEN…NTIP), 164-205 (AHTR…RTLN), 206-246 (GHEH…SLKS), 249-291 (GHSE…GVAM), 294-328 (GHSH…FPTI), 329-368 (PLEL…IAPH), 389-428 (GHSS…ETGY), and 437-483 (GHDG…NSIK).

It belongs to the WD repeat LIS1/nudF family. As to quaternary structure, self-associates. Interacts with NDL1 and dynein.

Its subcellular location is the cytoplasm. The protein resides in the cytoskeleton. It localises to the spindle pole. Positively regulates the activity of the minus-end directed microtubule motor protein dynein. Plays a central role in positioning the mitotic spindle at the bud neck during cell division. Targets cytoplasmic dynein to microtubule plus ends, thereby promoting dynein-mediated microtubule sliding along the bud cortex and consequently the movement of the mitotic spindle to the bud neck. In Candida albicans (strain SC5314 / ATCC MYA-2876) (Yeast), this protein is Nuclear distribution protein PAC1.